Consider the following 803-residue polypeptide: Lon protease (803 aa).

Residues 9–202 enclose the Lon N-terminal domain; the sequence is MPVLPLRDVV…YLLGMMESEA (194 aa). 356–363 serves as a coordination point for ATP; that stretch reads GPPGVGKT. The 182-residue stretch at 592–773 folds into the Lon proteolytic domain; it reads QNRIGEVTGL…DEVLGFALEN (182 aa). Catalysis depends on residues Ser-679 and Lys-722.

It belongs to the peptidase S16 family. In terms of assembly, homohexamer. Organized in a ring with a central cavity.

Its subcellular location is the cytoplasm. The enzyme catalyses Hydrolysis of proteins in presence of ATP.. ATP-dependent serine protease that mediates the selective degradation of mutant and abnormal proteins as well as certain short-lived regulatory proteins. Required for cellular homeostasis and for survival from DNA damage and developmental changes induced by stress. Degrades polypeptides processively to yield small peptide fragments that are 5 to 10 amino acids long. Binds to DNA in a double-stranded, site-specific manner. The sequence is that of Lon protease from Haemophilus influenzae (strain ATCC 51907 / DSM 11121 / KW20 / Rd).